The sequence spans 95 residues: Small ribosomal subunit protein bS18 (95 aa).

Belongs to the bacterial ribosomal protein bS18 family. In terms of assembly, part of the 30S ribosomal subunit. Forms a tight heterodimer with protein bS6.

In terms of biological role, binds as a heterodimer with protein bS6 to the central domain of the 16S rRNA, where it helps stabilize the platform of the 30S subunit. The polypeptide is Small ribosomal subunit protein bS18 (Rickettsia massiliae (strain Mtu5)).